Here is a 60-residue protein sequence, read N- to C-terminus: Large ribosomal subunit protein bL32 (60 aa).

The protein belongs to the bacterial ribosomal protein bL32 family.

This Azotobacter vinelandii (strain DJ / ATCC BAA-1303) protein is Large ribosomal subunit protein bL32.